A 64-amino-acid chain; its full sequence is Large ribosomal subunit protein bL35 (64 aa).

The protein belongs to the bacterial ribosomal protein bL35 family.

This is Large ribosomal subunit protein bL35 from Kineococcus radiotolerans (strain ATCC BAA-149 / DSM 14245 / SRS30216).